The chain runs to 389 residues: GTPase Obg (389 aa).

One can recognise an Obg domain in the interval Met1–Leu159. One can recognise an OBG-type G domain in the interval Ala160 to Lys333. GTP contacts are provided by residues Gly166–Ser173, Phe191–Val195, Asp213–Gly216, Asn283–Asp286, and Ser314–Ala316. 2 residues coordinate Mg(2+): Ser173 and Thr193.

This sequence belongs to the TRAFAC class OBG-HflX-like GTPase superfamily. OBG GTPase family. As to quaternary structure, monomer. Mg(2+) is required as a cofactor.

It is found in the cytoplasm. Its function is as follows. An essential GTPase which binds GTP, GDP and possibly (p)ppGpp with moderate affinity, with high nucleotide exchange rates and a fairly low GTP hydrolysis rate. Plays a role in control of the cell cycle, stress response, ribosome biogenesis and in those bacteria that undergo differentiation, in morphogenesis control. This is GTPase Obg from Shewanella amazonensis (strain ATCC BAA-1098 / SB2B).